Consider the following 585-residue polypeptide: RNA polymerase sigma factor RpoD (585 aa).

Residues 67–93 (PASTLVPKDDSKPARKKKESSASTSGS) form a disordered region. Residues 351–421 (LVKANLRLVV…TRAISDQART (71 aa)) form a sigma-70 factor domain-2 region. An Interaction with polymerase core subunit RpoC motif is present at residues 375–378 (DLIQ). The interval 430-506 (EQVNKVIRET…DTEVETPVNA (77 aa)) is sigma-70 factor domain-3. A sigma-70 factor domain-4 region spans residues 519–572 (VLHTLPAREQKVIRMRFGLDDGYPQTLEEVGYQFKVTRERIRQIEAKALRRLRH). Positions 545 to 564 (LEEVGYQFKVTRERIRQIEA) form a DNA-binding region, H-T-H motif.

Belongs to the sigma-70 factor family. RpoD/SigA subfamily. Interacts transiently with the RNA polymerase catalytic core.

Its subcellular location is the cytoplasm. In terms of biological role, sigma factors are initiation factors that promote the attachment of RNA polymerase to specific initiation sites and are then released. This sigma factor is the primary sigma factor during exponential growth. The polypeptide is RNA polymerase sigma factor RpoD (Leptospira interrogans serogroup Icterohaemorrhagiae serovar copenhageni (strain Fiocruz L1-130)).